We begin with the raw amino-acid sequence, 213 residues long: Pyrrolidone-carboxylate peptidase (213 aa).

Catalysis depends on residues Glu-78, Cys-141, and His-165.

Belongs to the peptidase C15 family. Homotetramer.

It is found in the cytoplasm. The catalysed reaction is Release of an N-terminal pyroglutamyl group from a polypeptide, the second amino acid generally not being Pro.. Functionally, removes 5-oxoproline from various penultimate amino acid residues except L-proline. In Clostridium perfringens (strain SM101 / Type A), this protein is Pyrrolidone-carboxylate peptidase.